The following is a 561-amino-acid chain: NADH-quinone oxidoreductase subunit C/D (561 aa).

The tract at residues Met1–Leu152 is NADH dehydrogenase I subunit C. Residues Lys176–Arg561 are NADH dehydrogenase I subunit D.

It in the N-terminal section; belongs to the complex I 30 kDa subunit family. In the C-terminal section; belongs to the complex I 49 kDa subunit family. As to quaternary structure, NDH-1 is composed of 13 different subunits. Subunits NuoB, CD, E, F, and G constitute the peripheral sector of the complex.

The protein localises to the cell inner membrane. It catalyses the reaction a quinone + NADH + 5 H(+)(in) = a quinol + NAD(+) + 4 H(+)(out). Functionally, NDH-1 shuttles electrons from NADH, via FMN and iron-sulfur (Fe-S) centers, to quinones in the respiratory chain. The immediate electron acceptor for the enzyme in this species is believed to be ubiquinone. Couples the redox reaction to proton translocation (for every two electrons transferred, four hydrogen ions are translocated across the cytoplasmic membrane), and thus conserves the redox energy in a proton gradient. The protein is NADH-quinone oxidoreductase subunit C/D of Campylobacter fetus subsp. fetus (strain 82-40).